A 318-amino-acid polypeptide reads, in one-letter code: Endochitinase 3 (318 aa).

A signal peptide spans 1 to 18 (EFTIFSLLFSLLLLNASA). Positions 19–60 (EQCGSQAGGALCAPGLCCSKFGWCGNTNDYCGPGNCQSQCPG) constitute a Chitin-binding type-1 domain. Disulfide bonds link Cys-21-Cys-36, Cys-30-Cys-42, Cys-35-Cys-49, Cys-54-Cys-58, Cys-89-Cys-152, Cys-164-Cys-172, and Cys-271-Cys-303. Catalysis depends on Glu-134, which acts as the Proton donor. A propeptide spans 312-318 (GLLVDTV) (removed in mature form, vacuolar targeting).

The protein belongs to the glycosyl hydrolase 19 family. Chitinase class I subfamily.

It is found in the vacuole. It carries out the reaction Random endo-hydrolysis of N-acetyl-beta-D-glucosaminide (1-&gt;4)-beta-linkages in chitin and chitodextrins.. Defense against chitin-containing fungal pathogens. This Solanum tuberosum (Potato) protein is Endochitinase 3 (CHTB3).